Here is a 253-residue protein sequence, read N- to C-terminus: MKIIIAPAKIMKLDRDSFPVQSTPEFLKKTRILEKFLKSRTRDQLETLWHASDKVVEQSLFQLKNMDLDTNLTPAILAFSGIQYQYMAPDLFTQPALDYIQKNLRILSGFYGMLRPFDGICPYRLELNTKMVGFRDYSLYHFWDEDIANSLFKEDQVVINLASKQYMRLVKPYLNSARRMITVDFQELKNDKWKTVGVHAKMARGEMVRFMAEKQIKNPADLRDFHDFDFQFVPEVSSDDHYIFRTDFDFTRH.

This sequence belongs to the UPF0246 family.

This is UPF0246 protein LBA1843 from Lactobacillus acidophilus (strain ATCC 700396 / NCK56 / N2 / NCFM).